The chain runs to 149 residues: Transcriptional regulator MraZ (149 aa).

2 SpoVT-AbrB domains span residues 9 to 52 (AYSY…PRAQ) and 82 to 125 (AQEV…DRAR).

It belongs to the MraZ family. As to quaternary structure, forms oligomers.

The protein localises to the cytoplasm. It is found in the nucleoid. The protein is Transcriptional regulator MraZ of Treponema pallidum subsp. pallidum (strain SS14).